We begin with the raw amino-acid sequence, 150 residues long: Cytochrome c oxidase subunit 5A, mitochondrial (150 aa).

The transit peptide at 1–41 (MLGAALRRCAVAATTWAGPRGHLHSARTPGPAAAIQSVRCY) directs the protein to the mitochondrion. The SIFI-degron motif lies at 2 to 17 (LGAALRRCAVAATTWA). 2 positions are modified to N6-acetyllysine: Lys-87 and Lys-113. Thr-141 is subject to Phosphothreonine.

The protein belongs to the cytochrome c oxidase subunit 5A family. Component of the cytochrome c oxidase (complex IV, CIV), a multisubunit enzyme composed of 14 subunits. The complex is composed of a catalytic core of 3 subunits MT-CO1, MT-CO2 and MT-CO3, encoded in the mitochondrial DNA, and 11 supernumerary subunits COX4I, COX5A, COX5B, COX6A, COX6B, COX6C, COX7A, COX7B, COX7C, COX8 and NDUFA4, which are encoded in the nuclear genome. The complex exists as a monomer or a dimer and forms supercomplexes (SCs) in the inner mitochondrial membrane with NADH-ubiquinone oxidoreductase (complex I, CI) and ubiquinol-cytochrome c oxidoreductase (cytochrome b-c1 complex, complex III, CIII), resulting in different assemblies (supercomplex SCI(1)III(2)IV(1) and megacomplex MCI(2)III(2)IV(2)). Interacts with AFG1L. Interacts with RAB5IF. Post-translationally, in response to mitochondrial stress, the precursor protein is ubiquitinated by the SIFI complex in the cytoplasm before mitochondrial import, leading to its degradation. Within the SIFI complex, UBR4 initiates ubiquitin chain that are further elongated or branched by KCMF1.

It localises to the mitochondrion inner membrane. Its pathway is energy metabolism; oxidative phosphorylation. Its function is as follows. Component of the cytochrome c oxidase, the last enzyme in the mitochondrial electron transport chain which drives oxidative phosphorylation. The respiratory chain contains 3 multisubunit complexes succinate dehydrogenase (complex II, CII), ubiquinol-cytochrome c oxidoreductase (cytochrome b-c1 complex, complex III, CIII) and cytochrome c oxidase (complex IV, CIV), that cooperate to transfer electrons derived from NADH and succinate to molecular oxygen, creating an electrochemical gradient over the inner membrane that drives transmembrane transport and the ATP synthase. Cytochrome c oxidase is the component of the respiratory chain that catalyzes the reduction of oxygen to water. Electrons originating from reduced cytochrome c in the intermembrane space (IMS) are transferred via the dinuclear copper A center (CU(A)) of subunit 2 and heme A of subunit 1 to the active site in subunit 1, a binuclear center (BNC) formed by heme A3 and copper B (CU(B)). The BNC reduces molecular oxygen to 2 water molecules using 4 electrons from cytochrome c in the IMS and 4 protons from the mitochondrial matrix. This Symphalangus syndactylus (Siamang) protein is Cytochrome c oxidase subunit 5A, mitochondrial (COX5A).